The primary structure comprises 434 residues: Protein arginine N-methyltransferase 2 (434 aa).

The tract at residues 155–198 (IQGEETTEEERKEEEPSNTSDIIDEQKVEQPKEDLKEDPSSNQE) is disordered. Basic and acidic residues predominate over residues 178–193 (DEQKVEQPKEDLKEDP). The region spanning 193–434 (PSSNQETYLK…YHPEARFMDV (242 aa)) is the RMT2 domain. S-adenosyl-L-methionine-binding positions include Tyr200, Met230, 258–263 (FGMGII), 279–281 (EAH), 306–307 (WQ), and Asp327.

The protein belongs to the class I-like SAM-binding methyltransferase superfamily. RMT2 methyltransferase family. As to quaternary structure, monomer.

The protein resides in the cytoplasm. The protein localises to the nucleus. Its function is as follows. S-adenosyl-L-methionine-dependent protein-arginine N-methyltransferase that methylates the delta-nitrogen atom of arginine residues to form N5-methylarginine (type IV) in target proteins. Monomethylates ribosomal protein L12. The protein is Protein arginine N-methyltransferase 2 of Debaryomyces hansenii (strain ATCC 36239 / CBS 767 / BCRC 21394 / JCM 1990 / NBRC 0083 / IGC 2968) (Yeast).